The following is a 256-amino-acid chain: Pimeloyl-[acyl-carrier protein] methyl ester esterase (256 aa).

The AB hydrolase-1 domain occupies 15–242 (HLVLLHGWGL…AAHAPFISHP (228 aa)). Residues Trp-22, 82-83 (SL), and 143-147 (FLALQ) each bind substrate. Catalysis depends on Ser-82, which acts as the Nucleophile. Active-site residues include Asp-207 and His-235. His-235 lines the substrate pocket.

The protein belongs to the AB hydrolase superfamily. Carboxylesterase BioH family. Monomer.

Its subcellular location is the cytoplasm. The enzyme catalyses 6-carboxyhexanoyl-[ACP] methyl ester + H2O = 6-carboxyhexanoyl-[ACP] + methanol + H(+). It participates in cofactor biosynthesis; biotin biosynthesis. In terms of biological role, the physiological role of BioH is to remove the methyl group introduced by BioC when the pimeloyl moiety is complete. It allows to synthesize pimeloyl-ACP via the fatty acid synthetic pathway through the hydrolysis of the ester bonds of pimeloyl-ACP esters. In Escherichia coli O6:K15:H31 (strain 536 / UPEC), this protein is Pimeloyl-[acyl-carrier protein] methyl ester esterase.